We begin with the raw amino-acid sequence, 172 residues long: Translationally-controlled tumor protein homolog (172 aa).

The TCTP domain occupies methionine 1–cysteine 172.

Belongs to the TCTP family.

The protein localises to the cytoplasm. In terms of biological role, involved in calcium binding and microtubule stabilization. The chain is Translationally-controlled tumor protein homolog (tpt1) from Xenopus tropicalis (Western clawed frog).